A 390-amino-acid polypeptide reads, in one-letter code: Chorismate synthase (390 aa).

Arg40 and Arg46 together coordinate NADP(+). FMN is bound by residues 129–131 (RAS), 249–250 (QA), Gly294, 309–313 (KPIPT), and Arg335.

Belongs to the chorismate synthase family. Homotetramer. FMNH2 serves as cofactor.

It catalyses the reaction 5-O-(1-carboxyvinyl)-3-phosphoshikimate = chorismate + phosphate. Its pathway is metabolic intermediate biosynthesis; chorismate biosynthesis; chorismate from D-erythrose 4-phosphate and phosphoenolpyruvate: step 7/7. In terms of biological role, catalyzes the anti-1,4-elimination of the C-3 phosphate and the C-6 proR hydrogen from 5-enolpyruvylshikimate-3-phosphate (EPSP) to yield chorismate, which is the branch point compound that serves as the starting substrate for the three terminal pathways of aromatic amino acid biosynthesis. This reaction introduces a second double bond into the aromatic ring system. The polypeptide is Chorismate synthase (Desulforudis audaxviator (strain MP104C)).